The primary structure comprises 737 residues: Catalase-peroxidase (737 aa).

The signal sequence occupies residues 1-23 (MLKKILPVLITLAIVHNTPTAWA). Residues 102-223 (WHGAGTYRIY…LAATQMGLIY (122 aa)) constitute a cross-link (tryptophyl-tyrosyl-methioninium (Trp-Tyr) (with M-249)). Residue His-103 is the Proton acceptor of the active site. The segment at residues 223-249 (YVNPEGPNGKPDPVAAAKDIREAFARM) is a cross-link (tryptophyl-tyrosyl-methioninium (Tyr-Met) (with W-102)). Residue His-264 participates in heme b binding.

Belongs to the peroxidase family. Peroxidase/catalase subfamily. In terms of assembly, homodimer or homotetramer. Heme b is required as a cofactor. In terms of processing, formation of the three residue Trp-Tyr-Met cross-link is important for the catalase, but not the peroxidase activity of the enzyme.

The catalysed reaction is H2O2 + AH2 = A + 2 H2O. It carries out the reaction 2 H2O2 = O2 + 2 H2O. Bifunctional enzyme with both catalase and broad-spectrum peroxidase activity. The protein is Catalase-peroxidase of Yersinia pseudotuberculosis serotype O:3 (strain YPIII).